Consider the following 352-residue polypeptide: Tubby-like F-box protein 10 (352 aa).

Basic and acidic residues predominate over residues Met-1–Ala-11. The disordered stretch occupies residues Met-1–Arg-23. The region spanning Gly-22 to Gly-78 is the F-box domain.

Belongs to the TUB family. Ubiquitous.

This Oryza sativa subsp. japonica (Rice) protein is Tubby-like F-box protein 10 (TULP10).